A 207-amino-acid polypeptide reads, in one-letter code: Large ribosomal subunit protein uL4 (207 aa).

Positions 44-85 (MRQGTHKTKNRAEVSGGGRKPWRQKGTGRARQGSIRSPQWRG) are disordered.

The protein belongs to the universal ribosomal protein uL4 family. Part of the 50S ribosomal subunit.

In terms of biological role, one of the primary rRNA binding proteins, this protein initially binds near the 5'-end of the 23S rRNA. It is important during the early stages of 50S assembly. It makes multiple contacts with different domains of the 23S rRNA in the assembled 50S subunit and ribosome. Forms part of the polypeptide exit tunnel. The protein is Large ribosomal subunit protein uL4 of Geobacillus thermodenitrificans (strain NG80-2).